Here is a 510-residue protein sequence, read N- to C-terminus: ATP synthase subunit alpha (510 aa).

Residue 169–176 participates in ATP binding; sequence GDRQTGKT.

It belongs to the ATPase alpha/beta chains family. F-type ATPases have 2 components, CF(1) - the catalytic core - and CF(0) - the membrane proton channel. CF(1) has five subunits: alpha(3), beta(3), gamma(1), delta(1), epsilon(1). CF(0) has four main subunits: a(1), b(1), b'(1) and c(9-12).

The protein localises to the cell inner membrane. It carries out the reaction ATP + H2O + 4 H(+)(in) = ADP + phosphate + 5 H(+)(out). Its function is as follows. Produces ATP from ADP in the presence of a proton gradient across the membrane. The alpha chain is a regulatory subunit. The polypeptide is ATP synthase subunit alpha (Rhodopseudomonas palustris (strain BisA53)).